Reading from the N-terminus, the 666-residue chain is DNA ligase (666 aa).

NAD(+)-binding positions include 31-35, 80-81, and Glu111; these read DYDFD and SL. Lys113 functions as the N6-AMP-lysine intermediate in the catalytic mechanism. Residues Arg134, Glu170, Lys285, and Lys309 each coordinate NAD(+). 4 residues coordinate Zn(2+): Cys403, Cys406, Cys421, and Cys427. The region spanning 587-666 is the BRCT domain; sequence VVSNKLLGKI…ESDFSALLTS (80 aa).

This sequence belongs to the NAD-dependent DNA ligase family. LigA subfamily. Mg(2+) serves as cofactor. The cofactor is Mn(2+).

The catalysed reaction is NAD(+) + (deoxyribonucleotide)n-3'-hydroxyl + 5'-phospho-(deoxyribonucleotide)m = (deoxyribonucleotide)n+m + AMP + beta-nicotinamide D-nucleotide.. Functionally, DNA ligase that catalyzes the formation of phosphodiester linkages between 5'-phosphoryl and 3'-hydroxyl groups in double-stranded DNA using NAD as a coenzyme and as the energy source for the reaction. It is essential for DNA replication and repair of damaged DNA. In Flavobacterium psychrophilum (strain ATCC 49511 / DSM 21280 / CIP 103535 / JIP02/86), this protein is DNA ligase.